We begin with the raw amino-acid sequence, 444 residues long: C4-dicarboxylate transport protein (444 aa).

Transmembrane regions (helical) follow at residues 18–40 (FYSH…GHFY), 53–75 (AFIK…TGIA), 90–112 (AMLY…ANVV), 142–159 (IVGF…GAFA), 163–180 (ILQV…LAMV), 201–222 (LVAI…FTIG), 232–254 (LAML…LGAV), 327–349 (LFIA…LLVA), and 364–386 (FITL…ALIL).

Belongs to the dicarboxylate/amino acid:cation symporter (DAACS) (TC 2.A.23) family.

Its subcellular location is the cell inner membrane. Functionally, responsible for the transport of dicarboxylates such as succinate, fumarate, and malate from the periplasm across the inner membrane. This transport system plays an important role in the energy supply of rhizobium-legume symbionts. The chain is C4-dicarboxylate transport protein (dctA) from Rhizobium leguminosarum.